Consider the following 91-residue polypeptide: Probable Fe(2+)-trafficking protein (91 aa).

The protein belongs to the Fe(2+)-trafficking protein family.

Could be a mediator in iron transactions between iron acquisition and iron-requiring processes, such as synthesis and/or repair of Fe-S clusters in biosynthetic enzymes. The polypeptide is Probable Fe(2+)-trafficking protein (Burkholderia thailandensis (strain ATCC 700388 / DSM 13276 / CCUG 48851 / CIP 106301 / E264)).